Here is a 221-residue protein sequence, read N- to C-terminus: Protein OPG170 (221 aa).

The signal sequence occupies residues 1-17; the sequence is MYLLFIILMYLLPFSFQ. Asparagine 72 carries an N-linked (GlcNAc...) asparagine; by host glycan.

It belongs to the orthopoxvirus OPG170 family.

It is found in the secreted. In terms of biological role, may interact with several cellular chemokines to interfere with chemokine-glycosaminoglycan (GAG) interactions at the cell surface to alter chemotaxis of nearby responsive cells. This Monkeypox virus protein is Protein OPG170 (OPG170).